Consider the following 133-residue polypeptide: ATP synthase epsilon chain (133 aa).

This sequence belongs to the ATPase epsilon chain family. F-type ATPases have 2 components, CF(1) - the catalytic core - and CF(0) - the membrane proton channel. CF(1) has five subunits: alpha(3), beta(3), gamma(1), delta(1), epsilon(1). CF(0) has three main subunits: a, b and c.

It localises to the cell membrane. In terms of biological role, produces ATP from ADP in the presence of a proton gradient across the membrane. This Bacillus anthracis (strain A0248) protein is ATP synthase epsilon chain.